The primary structure comprises 370 residues: Anhydro-N-acetylmuramic acid kinase (370 aa).

13-20 (GTSMDGVD) lines the ATP pocket.

This sequence belongs to the anhydro-N-acetylmuramic acid kinase family.

The catalysed reaction is 1,6-anhydro-N-acetyl-beta-muramate + ATP + H2O = N-acetyl-D-muramate 6-phosphate + ADP + H(+). It functions in the pathway amino-sugar metabolism; 1,6-anhydro-N-acetylmuramate degradation. Its pathway is cell wall biogenesis; peptidoglycan recycling. Its function is as follows. Catalyzes the specific phosphorylation of 1,6-anhydro-N-acetylmuramic acid (anhMurNAc) with the simultaneous cleavage of the 1,6-anhydro ring, generating MurNAc-6-P. Is required for the utilization of anhMurNAc either imported from the medium or derived from its own cell wall murein, and thus plays a role in cell wall recycling. This chain is Anhydro-N-acetylmuramic acid kinase, found in Shewanella frigidimarina (strain NCIMB 400).